Reading from the N-terminus, the 714-residue chain is Zinc finger matrin-type protein 1 (714 aa).

Residues 89–119 (NFCKPCGVVLQHESERISHFESEIHAQNVKF) form a Matrin-type 1 zinc finger. The segment at 172 to 214 (HYVGKSHSPTQNQSLEEHDQVSPSTCSPKMDEPNTTPAPPPFL) is disordered. The Matrin-type 2 zinc-finger motif lies at 230–254 (YVCHICSITFTSLHMFRSHMQGTEH). The segment covering 417–434 (RERVDSEHRQRPCEERFS) has biased composition (basic and acidic residues). 2 disordered regions span residues 417–469 (RERV…NDDF) and 571–714 (MPAS…ILGF). Composition is skewed to polar residues over residues 437–446 (APQTYQQEYS) and 575–588 (LSLS…SSYN). The segment covering 609 to 619 (SHRRRRQKRKR) has biased composition (basic residues). Composition is skewed to basic and acidic residues over residues 620-632 (HLEE…EKEQ) and 640-662 (SYQD…EDKA). The span at 669-678 (TKHRRKKRKH) shows a compositional bias: basic residues.

Its subcellular location is the nucleus. The polypeptide is Zinc finger matrin-type protein 1 (Zmat1) (Mus musculus (Mouse)).